Reading from the N-terminus, the 230-residue chain is MSRCLALVPAAGGGSRMGADRPKQYLDLAGAPLLAHTLRRLLAEPRLARVLVVLAPDDVWFDRFDWPRDVRLEILRVGGATRAESVRNGLLHAGAAADDWVLVHDAARCCLPPDALDRLIDTLQADPVGGLLALPVADTLKRETSGQRVAQTVSREGLWLAQTPQMFRAGMLALALDRPLDRAVTDEASAIERLGLVPRLVTGDALNFKVTWPHDLVLARAVLGLDNAGK.

Belongs to the IspD/TarI cytidylyltransferase family. IspD subfamily.

The enzyme catalyses 2-C-methyl-D-erythritol 4-phosphate + CTP + H(+) = 4-CDP-2-C-methyl-D-erythritol + diphosphate. It functions in the pathway isoprenoid biosynthesis; isopentenyl diphosphate biosynthesis via DXP pathway; isopentenyl diphosphate from 1-deoxy-D-xylulose 5-phosphate: step 2/6. In terms of biological role, catalyzes the formation of 4-diphosphocytidyl-2-C-methyl-D-erythritol from CTP and 2-C-methyl-D-erythritol 4-phosphate (MEP). This Laribacter hongkongensis (strain HLHK9) protein is 2-C-methyl-D-erythritol 4-phosphate cytidylyltransferase.